The chain runs to 423 residues: Endochitinase 1 (423 aa).

The first 22 residues, 1–22 (MPSLFAQSLAIIATLQATLGLA), serve as a signal peptide directing secretion. The region spanning 39 to 401 (YVNAVYFTNW…GTSSNKLGGP (363 aa)) is the GH18 domain. N74, N78, and N96 each carry an N-linked (GlcNAc...) asparagine glycan. Residues 103–104 (GT) and 130–133 (GGWT) contribute to the chitin site. The Proton donor role is filled by E172. Chitin contacts are provided by residues Y173 and 238-241 (MAYD). N248 carries N-linked (GlcNAc...) asparagine glycosylation. W378 is a binding site for chitin. The interval 380–423 (ASSDRSGSQSLIGTSSNKLGGPDSTENLLNYPDSKYDNMRKQMA) is disordered. Polar residues predominate over residues 383–407 (DRSGSQSLIGTSSNKLGGPDSTENL). Positions 413–423 (SKYDNMRKQMA) are enriched in basic and acidic residues.

It belongs to the glycosyl hydrolase 18 family. Chitinase class V subfamily.

The protein localises to the secreted. The enzyme catalyses Random endo-hydrolysis of N-acetyl-beta-D-glucosaminide (1-&gt;4)-beta-linkages in chitin and chitodextrins.. In terms of biological role, secreted chitinase involved in the degradation of chitin, a component of the cell walls of fungi and exoskeletal elements of some animals (including worms and arthropods). Participates in the infection process and directly acts in the penetration process of the host cuticle. The protein is Endochitinase 1 (chit1) of Metarhizium anisopliae (Entomophthora anisopliae).